Reading from the N-terminus, the 287-residue chain is Glutamate racemase (287 aa).

Positions 1–15 (MATKPQDANTTSREA) are enriched in polar residues. Residues 1-25 (MATKPQDANTTSREAITSKADSPPR) form a disordered region. Substrate-binding positions include 32 to 33 (DS) and 64 to 65 (YG). The active-site Proton donor/acceptor is the Cys-96. Residue 97 to 98 (NT) participates in substrate binding. Cys-208 serves as the catalytic Proton donor/acceptor. 209-210 (TH) contributes to the substrate binding site.

The protein belongs to the aspartate/glutamate racemases family.

It catalyses the reaction L-glutamate = D-glutamate. Its pathway is cell wall biogenesis; peptidoglycan biosynthesis. Provides the (R)-glutamate required for cell wall biosynthesis. This Yersinia pseudotuberculosis serotype O:1b (strain IP 31758) protein is Glutamate racemase.